We begin with the raw amino-acid sequence, 216 residues long: Protein InaA (216 aa).

This sequence belongs to the protein kinase superfamily. KdkA/RfaP family.

In terms of biological role, may be an environmental sensor responsive to several stimuli, including internal pH, proton motive force, temperature, and possibly other unknown factors. The chain is Protein InaA (inaA) from Escherichia coli (strain K12).